The primary structure comprises 445 residues: Phosphoglucosamine mutase (445 aa).

Residue Ser-102 is the Phosphoserine intermediate of the active site. Mg(2+) is bound by residues Ser-102, Asp-241, Asp-243, and Asp-245. The residue at position 102 (Ser-102) is a Phosphoserine.

Belongs to the phosphohexose mutase family. Mg(2+) serves as cofactor. Post-translationally, activated by phosphorylation.

It catalyses the reaction alpha-D-glucosamine 1-phosphate = D-glucosamine 6-phosphate. Functionally, catalyzes the conversion of glucosamine-6-phosphate to glucosamine-1-phosphate. The protein is Phosphoglucosamine mutase of Shewanella halifaxensis (strain HAW-EB4).